The primary structure comprises 211 residues: Endo-1,4-beta-xylanase 4 (211 aa).

Positions Met1–Ala16 are cleaved as a signal peptide. Residues Val19–Ser210 form the GH11 domain. Asn101 carries N-linked (GlcNAc...) asparagine glycosylation. The Nucleophile role is filled by Glu106. The Proton donor role is filled by Glu197.

Belongs to the glycosyl hydrolase 11 (cellulase G) family.

It localises to the secreted. The catalysed reaction is Endohydrolysis of (1-&gt;4)-beta-D-xylosidic linkages in xylans.. It participates in glycan degradation; xylan degradation. In terms of biological role, endo-1,4-beta-xylanase involved in the hydrolysis of xylan, a major structural heterogeneous polysaccharide found in plant biomass representing the second most abundant polysaccharide in the biosphere, after cellulose. The protein is Endo-1,4-beta-xylanase 4 (XYN4) of Aspergillus niger.